Consider the following 386-residue polypeptide: Delta(7)-sterol 5(6)-desaturase (386 aa).

Transmembrane regions (helical) follow at residues valine 119 to tyrosine 139, isoleucine 172 to phenylalanine 192, and alanine 206 to histidine 226. The Fatty acid hydroxylase domain occupies phenylalanine 214–asparagine 337. The Histidine box-1 signature appears at histidine 226–histidine 230. The short motif at histidine 239–histidine 243 is the Histidine box-2 element. Residues proline 272–tryptophan 292 form a helical membrane-spanning segment. Positions histidine 314 to histidine 318 match the Histidine box-3 motif.

It belongs to the sterol desaturase family. Fe cation serves as cofactor.

It is found in the endoplasmic reticulum membrane. The catalysed reaction is a Delta(7)-sterol + 2 Fe(II)-[cytochrome b5] + O2 + 2 H(+) = a Delta(5),Delta(7)-sterol + 2 Fe(III)-[cytochrome b5] + 2 H2O. It functions in the pathway steroid metabolism; ergosterol biosynthesis; ergosterol from zymosterol: step 3/5. Its function is as follows. Catalyzes the introduction of a C-5 double bond in the B ring of ergosterol. May contribute to the regulation of ergosterol biosynthesis. This is Delta(7)-sterol 5(6)-desaturase (ERG3) from Candida dubliniensis (strain CD36 / ATCC MYA-646 / CBS 7987 / NCPF 3949 / NRRL Y-17841) (Yeast).